We begin with the raw amino-acid sequence, 449 residues long: Ribosomal protein uS12 methylthiotransferase RimO (449 aa).

The MTTase N-terminal domain occupies 16–126 (PKISFVSLGC…VMEAVHAAIA (111 aa)). Cys-25, Cys-61, Cys-90, Cys-157, Cys-161, and Cys-164 together coordinate [4Fe-4S] cluster. The 239-residue stretch at 143–381 (LTPRHYAYLK…MEHQQKISAR (239 aa)) folds into the Radical SAM core domain. In terms of domain architecture, TRAM spans 384 to 449 (REKIGKHVSV…DAYDLHGKAV (66 aa)).

The protein belongs to the methylthiotransferase family. RimO subfamily. Requires [4Fe-4S] cluster as cofactor.

It localises to the cytoplasm. The catalysed reaction is L-aspartate(89)-[ribosomal protein uS12]-hydrogen + (sulfur carrier)-SH + AH2 + 2 S-adenosyl-L-methionine = 3-methylsulfanyl-L-aspartate(89)-[ribosomal protein uS12]-hydrogen + (sulfur carrier)-H + 5'-deoxyadenosine + L-methionine + A + S-adenosyl-L-homocysteine + 2 H(+). Functionally, catalyzes the methylthiolation of an aspartic acid residue of ribosomal protein uS12. This Beijerinckia indica subsp. indica (strain ATCC 9039 / DSM 1715 / NCIMB 8712) protein is Ribosomal protein uS12 methylthiotransferase RimO.